The following is a 233-amino-acid chain: Ribosome-recycling factor, mitochondrial (233 aa).

The protein belongs to the RRF family.

The protein localises to the mitochondrion. Its function is as follows. Necessary for protein synthesis in mitochondria. Functions as a ribosome recycling factor in mitochondria. The protein is Ribosome-recycling factor, mitochondrial (RRF1) of Candida glabrata (strain ATCC 2001 / BCRC 20586 / JCM 3761 / NBRC 0622 / NRRL Y-65 / CBS 138) (Yeast).